The chain runs to 84 residues: Xenoxin-1 (84 aa).

Positions M1–A18 are cleaved as a signal peptide. Cystine bridges form between C21–C42, C35–C55, C61–C76, and C77–C82.

Expressed by the skin dorsal glands.

It localises to the secreted. Lacks alpha-neurotoxic activity, has apparently no antibacterial activity, nor anti-coagulant potency. In Xenopus laevis (African clawed frog), this protein is Xenoxin-1 (xenoxin-1).